The chain runs to 523 residues: Glutamate--cysteine ligase (523 aa).

The protein belongs to the glutamate--cysteine ligase type 1 family. Type 1 subfamily.

The catalysed reaction is L-cysteine + L-glutamate + ATP = gamma-L-glutamyl-L-cysteine + ADP + phosphate + H(+). The protein operates within sulfur metabolism; glutathione biosynthesis; glutathione from L-cysteine and L-glutamate: step 1/2. The protein is Glutamate--cysteine ligase of Baumannia cicadellinicola subsp. Homalodisca coagulata.